Consider the following 732-residue polypeptide: Beta-galactosidase 5 (732 aa).

Residues 1–23 (MGTTILVLSKILTFLLTTMLIGS) form the signal peptide. Glu187 serves as the catalytic Proton donor. Glu256 functions as the Nucleophile in the catalytic mechanism. Residue Asn466 is glycosylated (N-linked (GlcNAc...) asparagine).

The protein belongs to the glycosyl hydrolase 35 family. Expressed in leaves and flowers.

The protein resides in the secreted. It is found in the extracellular space. Its subcellular location is the apoplast. It catalyses the reaction Hydrolysis of terminal non-reducing beta-D-galactose residues in beta-D-galactosides.. The protein is Beta-galactosidase 5 (BGAL5) of Arabidopsis thaliana (Mouse-ear cress).